A 459-amino-acid chain; its full sequence is tRNA modification GTPase MnmE (459 aa).

(6S)-5-formyl-5,6,7,8-tetrahydrofolate contacts are provided by Arg22, Glu87, and Arg126. Residues 221-381 form the TrmE-type G domain; the sequence is GINVAICGKP…LEESIEKAVL (161 aa). Asn231 contacts K(+). Residues 231–236, 250–256, and 275–278 contribute to the GTP site; these read NVGKSS, TSIPGTT, and DTAG. Ser235 lines the Mg(2+) pocket. K(+) contacts are provided by Thr250, Ile252, and Thr255. Residue Thr256 coordinates Mg(2+). Lys459 serves as a coordination point for (6S)-5-formyl-5,6,7,8-tetrahydrofolate.

The protein belongs to the TRAFAC class TrmE-Era-EngA-EngB-Septin-like GTPase superfamily. TrmE GTPase family. As to quaternary structure, homodimer. Heterotetramer of two MnmE and two MnmG subunits. K(+) serves as cofactor.

It localises to the cytoplasm. Its function is as follows. Exhibits a very high intrinsic GTPase hydrolysis rate. Involved in the addition of a carboxymethylaminomethyl (cmnm) group at the wobble position (U34) of certain tRNAs, forming tRNA-cmnm(5)s(2)U34. In Syntrophomonas wolfei subsp. wolfei (strain DSM 2245B / Goettingen), this protein is tRNA modification GTPase MnmE.